We begin with the raw amino-acid sequence, 371 residues long: Enoyl-[acyl-carrier-protein] reductase [NADH] 2, chloroplastic (371 aa).

Residues 1 to 67 (MGASVTTGLQ…SLNHKRFAVR (67 aa)) constitute a chloroplast transit peptide. NAD(+) contacts are provided by residues Gly-87, Tyr-94, 151–152 (DA), 198–199 (SL), and Leu-248. Active-site proton acceptor residues include Tyr-250 and Tyr-260. NAD(+) is bound by residues Lys-268 and 298-302 (LGSRA).

Belongs to the short-chain dehydrogenases/reductases (SDR) family. FabI subfamily. Homotetramer.

It localises to the plastid. The protein localises to the chloroplast. The catalysed reaction is a 2,3-saturated acyl-[ACP] + NAD(+) = a (2E)-enoyl-[ACP] + NADH + H(+). Its pathway is lipid metabolism; fatty acid biosynthesis. Catalyzes the NAD-dependent reduction of a carbon-carbon double bond in an enoyl moiety that is covalently linked to an acyl carrier protein (ACP). Catalyzes the last reduction step in the de novo synthesis cycle of fatty acids. Involved in the elongation cycle of fatty acids which are used in lipid metabolism. Required for normal plant growth. This chain is Enoyl-[acyl-carrier-protein] reductase [NADH] 2, chloroplastic, found in Oryza sativa subsp. japonica (Rice).